Here is a 122-residue protein sequence, read N- to C-terminus: Basic phospholipase A2 homolog (122 aa).

7 disulfide bridges follow: Cys-26/Cys-115, Cys-28/Cys-44, Cys-43/Cys-95, Cys-49/Cys-122, Cys-50/Cys-88, Cys-57/Cys-81, and Cys-75/Cys-86. An important for membrane-damaging activities in eukaryotes and bacteria; heparin-binding region spans residues 105-117; it reads KRYMTYPNILCSS.

It belongs to the phospholipase A2 family. Group II subfamily. N49 sub-subfamily. As to expression, expressed by the venom gland.

Its subcellular location is the secreted. The chain is Basic phospholipase A2 homolog from Gloydius halys (Chinese water mocassin).